The following is a 548-amino-acid chain: Probable malate:quinone oxidoreductase (548 aa).

The tract at residues 521–548 (DKPQAADSTPKPQLKPKPVQKEVADIAL) is disordered. Residues 539-548 (VQKEVADIAL) show a composition bias toward basic and acidic residues.

This sequence belongs to the MQO family. FAD serves as cofactor.

The enzyme catalyses (S)-malate + a quinone = a quinol + oxaloacetate. The protein operates within carbohydrate metabolism; tricarboxylic acid cycle; oxaloacetate from (S)-malate (quinone route): step 1/1. This Escherichia coli (strain ATCC 8739 / DSM 1576 / NBRC 3972 / NCIMB 8545 / WDCM 00012 / Crooks) protein is Probable malate:quinone oxidoreductase.